A 158-amino-acid polypeptide reads, in one-letter code: 18.1 kDa class I heat shock protein (158 aa).

The sHSP domain maps to 44 to 158; sequence ENPAFVSTRV…AEVKSIEISG (115 aa).

It belongs to the small heat shock protein (HSP20) family. Forms oligomeric structures.

The protein resides in the cytoplasm. The sequence is that of 18.1 kDa class I heat shock protein (HSP18.1) from Pisum sativum (Garden pea).